Consider the following 2109-residue polypeptide: General transcription factor 3C polypeptide 1 (2109 aa).

A disordered region spans residues 467 to 521 (LPEGEDTFLSESDSEEERSSSKRRGRGSQKDTRASANLRPKTQPHHSTPTKGGWK). The segment covering 469-482 (EGEDTFLSESDSEE) has biased composition (acidic residues). Lys-529 participates in a covalent cross-link: Glycyl lysine isopeptide (Lys-Gly) (interchain with G-Cter in SUMO2). Positions 586 to 609 (MENPKESSSSLKTGRHSSGQDKPH) are disordered. At Ser-667 the chain carries Phosphoserine. Over residues 718–727 (STANRVKTSQ) the composition is skewed to polar residues. Residues 718–775 (STANRVKTSQPPVPQGEAEEDSQGKEGPSGSGDSQLSASSRSESGRMKKSDNKMGITP) form a disordered region. Phosphoserine is present on Ser-739. Low complexity predominate over residues 748–759 (SGDSQLSASSRS). The span at 760-769 (ESGRMKKSDN) shows a compositional bias: basic and acidic residues. Glycyl lysine isopeptide (Lys-Gly) (interchain with G-Cter in SUMO2) cross-links involve residues Lys-770 and Lys-833. 2 disordered regions span residues 836–857 (SGRA…SEAP) and 1059–1082 (RKNS…ESAM). Phosphoserine occurs at positions 1062 and 1068. Positions 1073 to 1082 (SLQKEQESAM) are enriched in basic and acidic residues. Residue Lys-1142 forms a Glycyl lysine isopeptide (Lys-Gly) (interchain with G-Cter in SUMO2) linkage. The segment at 1202–1241 (SLDRNRRVRGGKSQKRKRLKKDPGKKIKRKKKGEFPGEKS) is disordered. The segment covering 1207-1221 (RRVRGGKSQKRKRLK) has biased composition (basic residues). Phosphoserine occurs at positions 1253 and 1611. A disordered region spans residues 1608 to 1631 (KDGSLEDDEDEEDDLDEGVGGKRR). Positions 1612–1624 (LEDDEDEEDDLDE) are enriched in acidic residues. Phosphoserine is present on residues Ser-1632 and Ser-1653. Positions 1823 to 1833 (EDADIQREDPQ) are enriched in basic and acidic residues. The disordered stretch occupies residues 1823–1961 (EDADIQREDP…GSEDPRGFTE (139 aa)). The segment covering 1838–1848 (EGSSSEDSPPE) has biased composition (low complexity). Ser-1856, Ser-1865, Ser-1868, Ser-1896, and Ser-1911 each carry phosphoserine. Low complexity predominate over residues 1916–1926 (LEDTAAAGAAQ). Residues 1937–1947 (SPGQEQLSGQA) show a composition bias toward polar residues. The residue at position 1969 (Ser-1969) is a Phosphoserine.

It belongs to the TFIIIC subunit 1 family. In terms of assembly, part of the TFIIIC subcomplex TFIIIC2, consisting of six subunits, GTF3C1, GTF3C2, GTF3C3, GTF3C4, GTF3C5 and GTF3C6. Interacts with IGHMBP2. Interacts with MAF1.

The protein resides in the nucleus. Functionally, required for RNA polymerase III-mediated transcription. Component of TFIIIC that initiates transcription complex assembly on tRNA and is required for transcription of 5S rRNA and other stable nuclear and cytoplasmic RNAs. Binds to the box B promoter element. The sequence is that of General transcription factor 3C polypeptide 1 (GTF3C1) from Homo sapiens (Human).